A 301-amino-acid polypeptide reads, in one-letter code: Protein FAM221A (301 aa).

The disordered stretch occupies residues 235-271 (MHAPSTSSPQPLAGGNEVGPSTQLSSLRKPEEDDMAY).

The protein belongs to the FAM221 family.

This Mus musculus (Mouse) protein is Protein FAM221A (Fam221a).